The primary structure comprises 657 residues: Tetracycline resistance protein TetQ (657 aa).

One can recognise a tr-type G domain in the interval 17-260 (MNIINLGILA…AISSFILPPE (244 aa)). Residues 26–33 (AHIDAGKT), 90–94 (DTPGH), and 144–147 (NKID) each bind GTP.

The protein belongs to the TRAFAC class translation factor GTPase superfamily. Classic translation factor GTPase family. TetM/TetO subfamily.

Abolishes the inhibitory effect of tetracycline on protein synthesis by non-covalently modifying ribosomes. Confers mild resistance to tetracycline when expressed in E.coli. This chain is Tetracycline resistance protein TetQ (tetQ), found in Bacteroides fragilis.